Here is a 289-residue protein sequence, read N- to C-terminus: ATP synthase gamma chain (289 aa).

It belongs to the ATPase gamma chain family. As to quaternary structure, F-type ATPases have 2 components, CF(1) - the catalytic core - and CF(0) - the membrane proton channel. CF(1) has five subunits: alpha(3), beta(3), gamma(1), delta(1), epsilon(1). CF(0) has three main subunits: a, b and c.

It is found in the cell inner membrane. Its function is as follows. Produces ATP from ADP in the presence of a proton gradient across the membrane. The gamma chain is believed to be important in regulating ATPase activity and the flow of protons through the CF(0) complex. The protein is ATP synthase gamma chain of Polynucleobacter asymbioticus (strain DSM 18221 / CIP 109841 / QLW-P1DMWA-1) (Polynucleobacter necessarius subsp. asymbioticus).